Consider the following 291-residue polypeptide: m-AAA protease-interacting protein 1, mitochondrial (291 aa).

Residues 1 to 96 constitute a mitochondrion transit peptide; sequence MALAVRLLPR…TFPSCPRRTY (96 aa).

As to quaternary structure, interacts with AFG3L2. Interacts with SPG7. Interacts with SMDT1/EMRE (via the N-terminal transit peptide); interaction is direct and takes place before maturation of SMDT1/EMRE.

The protein resides in the mitochondrion matrix. Functionally, promotes sorting of SMDT1/EMRE in mitochondria by ensuring its maturation. Interacts with the transit peptide region of SMDT1/EMRE precursor protein in the mitochondrial matrix, leading to protect it against protein degradation by YME1L1, thereby ensuring SMDT1/EMRE maturation by the mitochondrial processing peptidase (PMPCA and PMPCB). The chain is m-AAA protease-interacting protein 1, mitochondrial from Bos taurus (Bovine).